The primary structure comprises 143 residues: Large ribosomal subunit protein uL11 (143 aa).

It belongs to the universal ribosomal protein uL11 family. In terms of assembly, part of the ribosomal stalk of the 50S ribosomal subunit. Interacts with L10 and the large rRNA to form the base of the stalk. L10 forms an elongated spine to which L12 dimers bind in a sequential fashion forming a multimeric L10(L12)X complex. In terms of processing, one or more lysine residues are methylated.

Functionally, forms part of the ribosomal stalk which helps the ribosome interact with GTP-bound translation factors. This chain is Large ribosomal subunit protein uL11, found in Burkholderia ambifaria (strain MC40-6).